Here is a 501-residue protein sequence, read N- to C-terminus: Mitogen-activated protein kinase MKC1 (501 aa).

One can recognise a Protein kinase domain in the interval 28-339 (FKIVKELGHG…VRDALNHKYL (312 aa)). Residues 34–42 (LGHGAYGIV) and Lys-74 contribute to the ATP site. The active-site Proton acceptor is Asp-174. A Phosphothreonine modification is found at Thr-211. The short motif at 211 to 213 (TEY) is the TXY element. A Phosphotyrosine modification is found at Tyr-213. Residues 400-450 (MQKREEQRQEEEEKELLEQQRQFPAQESMDISQTPYNNLETNIGTPQVEDD) are disordered. A compositionally biased stretch (polar residues) spans 422–444 (FPAQESMDISQTPYNNLETNIGT).

This sequence belongs to the protein kinase superfamily. CMGC Ser/Thr protein kinase family. MAP kinase subfamily. The cofactor is Mg(2+). Dually phosphorylated on Thr-211 and Tyr-213, which activates the enzyme.

The catalysed reaction is L-seryl-[protein] + ATP = O-phospho-L-seryl-[protein] + ADP + H(+). It carries out the reaction L-threonyl-[protein] + ATP = O-phospho-L-threonyl-[protein] + ADP + H(+). With respect to regulation, activated by tyrosine and threonine phosphorylation. This Candida albicans (Yeast) protein is Mitogen-activated protein kinase MKC1 (MKC1).